The sequence spans 232 residues: E3 ubiquitin-protein ligase RNF125 (232 aa).

Over residues 1 to 10 (MGSVLSTDSG) the composition is skewed to polar residues. The interval 1–23 (MGSVLSTDSGKSAPASATARALE) is disordered. A lipid anchor (N-myristoyl glycine) is attached at glycine 2. Zn(2+) contacts are provided by cysteine 37 and cysteine 40. An RING-type zinc finger spans residues 37–76 (CAVCLEVLHQPVRTRCGHVFCRSCIATSLKNNKWTCPYCR). Positions 43-45 (VLH) are interaction with the C2HC RNF-type zinc finger. Zn(2+)-binding residues include cysteine 52, histidine 54, cysteine 57, cysteine 60, cysteine 72, cysteine 75, cysteine 100, and cysteine 103. The C2HC RNF-type zinc finger occupies 100–119 (CAECDTLVCLSEMRAHIRTC). The interaction with the RING-type zinc finger stretch occupies residues 109 to 113 (LSEMR). Positions 115 and 119 each coordinate Zn(2+). Residues 120–128 (QKYIDKYGP) form a linker region region. The segment at 210 to 224 (EEALIRRVLDRSLLE) is required for interaction with ubiquitin and for autoubiquitination.

In terms of assembly, interacts with UBE2D1. Interacts with VCP/p97; leading to recruit RNF125 to RIGI and promote ubiquitination of RIGI. Post-translationally, autoubiquitinated, leading to its subsequent proteasomal degradation. In terms of tissue distribution, predominantly expressed in lymphoid tissues, including bone marrow, spleen and thymus. Also weakly expressed in other tissues. Predominant in the CD4(+) and CD8(+) T-cells, suggesting that it is preferentially confined to T-cells.

It is found in the golgi apparatus membrane. It catalyses the reaction S-ubiquitinyl-[E2 ubiquitin-conjugating enzyme]-L-cysteine + [acceptor protein]-L-lysine = [E2 ubiquitin-conjugating enzyme]-L-cysteine + N(6)-ubiquitinyl-[acceptor protein]-L-lysine.. It participates in protein modification; protein ubiquitination. In terms of biological role, E3 ubiquitin-protein ligase that mediates ubiquitination and subsequent proteasomal degradation of target proteins, such as RIGI, MAVS/IPS1, IFIH1/MDA5, JAK1 and p53/TP53. Acts as a negative regulator of type I interferon production by mediating ubiquitination of RIGI at 'Lys-181', leading to RIGI degradation. Mediates ubiquitination and subsequent degradation of p53/TP53. Mediates ubiquitination and subsequent degradation of JAK1. Acts as a positive regulator of T-cell activation. This chain is E3 ubiquitin-protein ligase RNF125, found in Homo sapiens (Human).